The sequence spans 276 residues: MDLWTAAQALILGIVEGLTEFLPISSTGHQIIVADLIDFGGERAMAFNIIIQLGAILAVVWEFRRKILDVVVGLPKQQEAQRFTLNLLIAFMPAVVLGVIFADTIHHYLFNAITVATALVVGGVIMLWAERRVHTVRTETVDDMTWRDALKIGLVQCLAMIPGTSRSGSTIIGGLLFGLSRKAATEFSFFLAMPTMVGAAVYSGYKYRDMFRPDDFAVFAIGFITSFVFAMIAVRALLKFIATHSYAVFAWYRIAFGLLILATWQFGWIDWASAKA.

6 helical membrane-spanning segments follow: residues 43-63 (RAMA…VWEF), 85-105 (LNLL…ADTI), 109-129 (LFNA…MLWA), 183-203 (AATE…AVYS), 218-238 (VFAI…RALL), and 254-274 (IAFG…WASA).

Belongs to the UppP family.

The protein localises to the cell inner membrane. It catalyses the reaction di-trans,octa-cis-undecaprenyl diphosphate + H2O = di-trans,octa-cis-undecaprenyl phosphate + phosphate + H(+). In terms of biological role, catalyzes the dephosphorylation of undecaprenyl diphosphate (UPP). Confers resistance to bacitracin. The sequence is that of Undecaprenyl-diphosphatase from Pseudomonas syringae pv. tomato (strain ATCC BAA-871 / DC3000).